Consider the following 226-residue polypeptide: MTTTELVALLHLASPALPIGAFSYSQGLEAALDANLIHDADSARNWIASGLTDVLAHGELPFLAHQLARWQAHDAPALAAENAWFVASRESSELRRETEQMGWSLAQLCASLEWGDAARRATLASLQPIALPTAFAYAAAAHDAGADAVLAAYAFGWVENQTAAALKAVPLGQLAGQRIIVALRDAIDAAVRRALATPADAVNTFAPQLGILSARHETQYSRLFRS.

It belongs to the UreF family. In terms of assembly, ureD, UreF and UreG form a complex that acts as a GTP-hydrolysis-dependent molecular chaperone, activating the urease apoprotein by helping to assemble the nickel containing metallocenter of UreC. The UreE protein probably delivers the nickel.

It is found in the cytoplasm. Functionally, required for maturation of urease via the functional incorporation of the urease nickel metallocenter. The protein is Urease accessory protein UreF of Burkholderia multivorans (strain ATCC 17616 / 249).